The primary structure comprises 335 residues: Lipoyl synthase (335 aa).

Residues Cys-55, Cys-60, Cys-66, Cys-81, Cys-85, Cys-88, and Ser-292 each contribute to the [4Fe-4S] cluster site. Residues 67-281 (WEDREATFLI…SQRAEEIGFQ (215 aa)) form the Radical SAM core domain.

The protein belongs to the radical SAM superfamily. Lipoyl synthase family. The cofactor is [4Fe-4S] cluster.

Its subcellular location is the cytoplasm. The catalysed reaction is [[Fe-S] cluster scaffold protein carrying a second [4Fe-4S](2+) cluster] + N(6)-octanoyl-L-lysyl-[protein] + 2 oxidized [2Fe-2S]-[ferredoxin] + 2 S-adenosyl-L-methionine + 4 H(+) = [[Fe-S] cluster scaffold protein] + N(6)-[(R)-dihydrolipoyl]-L-lysyl-[protein] + 4 Fe(3+) + 2 hydrogen sulfide + 2 5'-deoxyadenosine + 2 L-methionine + 2 reduced [2Fe-2S]-[ferredoxin]. Its pathway is protein modification; protein lipoylation via endogenous pathway; protein N(6)-(lipoyl)lysine from octanoyl-[acyl-carrier-protein]: step 2/2. Functionally, catalyzes the radical-mediated insertion of two sulfur atoms into the C-6 and C-8 positions of the octanoyl moiety bound to the lipoyl domains of lipoate-dependent enzymes, thereby converting the octanoylated domains into lipoylated derivatives. In Micrococcus luteus (strain ATCC 4698 / DSM 20030 / JCM 1464 / CCM 169 / CCUG 5858 / IAM 1056 / NBRC 3333 / NCIMB 9278 / NCTC 2665 / VKM Ac-2230) (Micrococcus lysodeikticus), this protein is Lipoyl synthase.